The chain runs to 177 residues: Adenine phosphoribosyltransferase (177 aa).

The protein belongs to the purine/pyrimidine phosphoribosyltransferase family. In terms of assembly, homodimer.

It localises to the cytoplasm. The enzyme catalyses AMP + diphosphate = 5-phospho-alpha-D-ribose 1-diphosphate + adenine. Its pathway is purine metabolism; AMP biosynthesis via salvage pathway; AMP from adenine: step 1/1. Its function is as follows. Catalyzes a salvage reaction resulting in the formation of AMP, that is energically less costly than de novo synthesis. The polypeptide is Adenine phosphoribosyltransferase (Chlorobaculum tepidum (strain ATCC 49652 / DSM 12025 / NBRC 103806 / TLS) (Chlorobium tepidum)).